Reading from the N-terminus, the 289-residue chain is Glycine--tRNA ligase alpha subunit (289 aa).

Belongs to the class-II aminoacyl-tRNA synthetase family. Tetramer of two alpha and two beta subunits.

It is found in the cytoplasm. The enzyme catalyses tRNA(Gly) + glycine + ATP = glycyl-tRNA(Gly) + AMP + diphosphate. The polypeptide is Glycine--tRNA ligase alpha subunit (Rickettsia akari (strain Hartford)).